An 83-amino-acid chain; its full sequence is Short neurotoxin 3FTx-Oxy3 (83 aa).

The first 21 residues, 1–21 (MKTLLLTLVVVTIVCLDLGYT), serve as a signal peptide directing secretion. Cystine bridges form between C24–C45, C38–C62, C64–C75, and C76–C81.

The protein belongs to the three-finger toxin family. Short-chain subfamily. Type I alpha-neurotoxin sub-subfamily. Expressed by the venom gland.

The protein localises to the secreted. Binds to muscle nicotinic acetylcholine receptor (nAChR) and inhibit acetylcholine from binding to the receptor, thereby impairing neuromuscular transmission. This chain is Short neurotoxin 3FTx-Oxy3, found in Oxyuranus microlepidotus (Inland taipan).